Consider the following 227-residue polypeptide: Atypical response regulator protein ChxR (227 aa).

Residues 6–108 enclose the Response regulatory domain; the sequence is HVLLVSEHWD…ILKSAISLFL (103 aa). Residues 117-213 constitute a DNA-binding region (ompR/PhoB-type); it reads PESIRFGPNV…LRGVGYLFSD (97 aa).

As to quaternary structure, homodimer.

Functionally, may be a global positive regulator of transcription. Binds a cis-acting element of its own promoter DNA sequence and is hence probably also involved in its own transcription activation. The recognition sequence is 5'-WHGAWNH-N(3-5)-WHGAWNH-3', where W is A/T, H is C/A/T, N is G/C/A/T and the linker length in the middle is 3 to 5 nucleotides. The polypeptide is Atypical response regulator protein ChxR (Chlamydia trachomatis serovar L2 (strain ATCC VR-902B / DSM 19102 / 434/Bu)).